The sequence spans 338 residues: Sesquiterpene synthase 2 (338 aa).

The Mg(2+) site is built by D93, N228, S232, and E236. The DDXXD motif signature appears at 93–97 (DNISD). An NSE/DTE motif motif is present at residues 228-236 (NDIFSYNVE). (2E,6E)-farnesyl diphosphate is bound by residues R316 and Y317.

It belongs to the terpene synthase family. The cofactor is Mg(2+).

The enzyme catalyses (2E,6E)-farnesyl diphosphate = alpha-copaene + diphosphate. It carries out the reaction (2E,6E)-farnesyl diphosphate = beta-copaene + diphosphate. The catalysed reaction is (2E,6E)-farnesyl diphosphate = alpha-muurolene + diphosphate. It catalyses the reaction (2E,6E)-farnesyl diphosphate = gamma-muurolene + diphosphate. The enzyme catalyses (2E,6E)-farnesyl diphosphate = delta-cadinene + diphosphate. In terms of biological role, terpene cyclase that catalyzes the cyclization of farnesyl diphosphate (FPP) to various sesquiterpenes, including alpha-copaene, beta-copaene, beta-elemene, alpha-muurolene, gamma-muurolene and delta-cadinene. The polypeptide is Sesquiterpene synthase 2 (Postia placenta (strain ATCC 44394 / Madison 698-R) (Brown rot fungus)).